A 393-amino-acid polypeptide reads, in one-letter code: Pre-mRNA-splicing regulator WTAP (393 aa).

Positions 240–393 are disordered; sequence QQQIQTSGNR…SSVNVQGSVL (154 aa). Residues 254-267 are compositionally biased toward basic and acidic residues; that stretch reads ESKDEGETSGKDCG. The segment covering 272–286 has biased composition (polar residues); that stretch reads GPSNGGSSHQRTHSS. Over residues 310-319 the composition is skewed to basic and acidic residues; it reads LPNHSEERTS. Residues 320 to 353 show a composition bias toward polar residues; the sequence is RGGSSYMNQLSTGYESVDSPTGSENSLTHQSNDT. Residues 354-365 are compositionally biased toward basic and acidic residues; sequence DSNHDSQEEKPV. Over residues 369 to 393 the composition is skewed to polar residues; the sequence is GNRTVSSRHLQNGLDSSVNVQGSVL.

It belongs to the fl(2)d family. In terms of assembly, component of the WMM complex, a N6-methyltransferase complex composed of a catalytic subcomplex, named MAC, and of an associated subcomplex, named MACOM. Component of the MACOM subcomplex.

The protein resides in the nucleus speckle. It localises to the nucleus. The protein localises to the nucleoplasm. Associated component of the WMM complex, a complex that mediates N6-methyladenosine (m6A) methylation of RNAs, a modification that plays a role in the efficiency of mRNA splicing and RNA processing. This chain is Pre-mRNA-splicing regulator WTAP, found in Xenopus tropicalis (Western clawed frog).